We begin with the raw amino-acid sequence, 537 residues long: Glutamyl-tRNA(Gln) amidotransferase subunit A, chloroplastic/mitochondrial (537 aa).

Residues K116 and S191 each act as charge relay system in the active site. The active-site Acyl-ester intermediate is S215.

This sequence belongs to the amidase family. GatA subfamily. As to quaternary structure, subunit of the heterotrimeric GatCAB amidotransferase (AdT) complex, composed of A, B and C subunits.

Its subcellular location is the mitochondrion. It localises to the plastid. It is found in the chloroplast stroma. It catalyses the reaction L-glutamyl-tRNA(Gln) + L-glutamine + ATP + H2O = L-glutaminyl-tRNA(Gln) + L-glutamate + ADP + phosphate + H(+). Its function is as follows. Allows the formation of correctly charged Gln-tRNA(Gln) through the transamidation of misacylated Glu-tRNA(Gln) in chloroplasts and mitochondria. The reaction takes place in the presence of glutamine and ATP through an activated gamma-phospho-Glu-tRNA(Gln). In Arabidopsis thaliana (Mouse-ear cress), this protein is Glutamyl-tRNA(Gln) amidotransferase subunit A, chloroplastic/mitochondrial.